The following is a 510-amino-acid chain: Archaeal glutamate synthase [NADPH] (510 aa).

2 4Fe-4S ferredoxin-type domains span residues 10-37 (YKVEVDPNRCMLCERCTIECSWGVYRRE) and 38-68 (GDRIISYSNRCGACHRCVVMCPRDAITIKEN). [4Fe-4S] cluster-binding residues include cysteine 19, cysteine 22, cysteine 25, cysteine 29, cysteine 48, cysteine 51, cysteine 54, and cysteine 58.

The protein belongs to the glutamate synthase family. It depends on FMN as a cofactor.

It catalyses the reaction 2 L-glutamate + NADP(+) = L-glutamine + 2-oxoglutarate + NADPH + H(+). This chain is Archaeal glutamate synthase [NADPH], found in Methanocaldococcus jannaschii (strain ATCC 43067 / DSM 2661 / JAL-1 / JCM 10045 / NBRC 100440) (Methanococcus jannaschii).